A 228-amino-acid polypeptide reads, in one-letter code: Ribonuclease 3 (228 aa).

One can recognise an RNase III domain in the interval 5–127 (KDALQDRLGY…LFGAIYLDGG (123 aa)). Glutamate 40 contacts Mg(2+). Aspartate 44 is an active-site residue. Mg(2+)-binding residues include aspartate 113 and glutamate 116. Residue glutamate 116 is part of the active site. Positions 154-224 (DPKTRLQEHL…AEQMLKRLED (71 aa)) constitute a DRBM domain. A disordered region spans residues 200–228 (AEGEAGSRRKAEQQAAEQMLKRLEDKHER). The segment covering 218-228 (MLKRLEDKHER) has biased composition (basic and acidic residues).

The protein belongs to the ribonuclease III family. As to quaternary structure, homodimer. Mg(2+) serves as cofactor.

The protein localises to the cytoplasm. It catalyses the reaction Endonucleolytic cleavage to 5'-phosphomonoester.. Its function is as follows. Digests double-stranded RNA. Involved in the processing of primary rRNA transcript to yield the immediate precursors to the large and small rRNAs (23S and 16S). Processes some mRNAs, and tRNAs when they are encoded in the rRNA operon. Processes pre-crRNA and tracrRNA of type II CRISPR loci if present in the organism. The protein is Ribonuclease 3 of Alkalilimnicola ehrlichii (strain ATCC BAA-1101 / DSM 17681 / MLHE-1).